Consider the following 370-residue polypeptide: Queuine tRNA-ribosyltransferase (370 aa).

Asp89 functions as the Proton acceptor in the catalytic mechanism. Residues Asp89–Phe93, Asp143, Gln185, and Gly212 each bind substrate. An RNA binding region spans residues Gly243–Asp249. Catalysis depends on Asp262, which acts as the Nucleophile. The interval Thr267–Arg271 is RNA binding; important for wobble base 34 recognition. Cys300, Cys302, Cys305, and His331 together coordinate Zn(2+).

Belongs to the queuine tRNA-ribosyltransferase family. Homodimer. Within each dimer, one monomer is responsible for RNA recognition and catalysis, while the other monomer binds to the replacement base PreQ1. Requires Zn(2+) as cofactor.

It carries out the reaction 7-aminomethyl-7-carbaguanine + guanosine(34) in tRNA = 7-aminomethyl-7-carbaguanosine(34) in tRNA + guanine. It participates in tRNA modification; tRNA-queuosine biosynthesis. Its function is as follows. Catalyzes the base-exchange of a guanine (G) residue with the queuine precursor 7-aminomethyl-7-deazaguanine (PreQ1) at position 34 (anticodon wobble position) in tRNAs with GU(N) anticodons (tRNA-Asp, -Asn, -His and -Tyr). Catalysis occurs through a double-displacement mechanism. The nucleophile active site attacks the C1' of nucleotide 34 to detach the guanine base from the RNA, forming a covalent enzyme-RNA intermediate. The proton acceptor active site deprotonates the incoming PreQ1, allowing a nucleophilic attack on the C1' of the ribose to form the product. After dissociation, two additional enzymatic reactions on the tRNA convert PreQ1 to queuine (Q), resulting in the hypermodified nucleoside queuosine (7-(((4,5-cis-dihydroxy-2-cyclopenten-1-yl)amino)methyl)-7-deazaguanosine). This is Queuine tRNA-ribosyltransferase from Hydrogenovibrio crunogenus (strain DSM 25203 / XCL-2) (Thiomicrospira crunogena).